We begin with the raw amino-acid sequence, 588 residues long: Adenine deaminase (588 aa).

The protein belongs to the metallo-dependent hydrolases superfamily. Adenine deaminase family. In terms of assembly, homodimer. Mn(2+) is required as a cofactor.

It catalyses the reaction adenine + H2O + H(+) = hypoxanthine + NH4(+). The polypeptide is Adenine deaminase (Escherichia coli O139:H28 (strain E24377A / ETEC)).